We begin with the raw amino-acid sequence, 692 residues long: MARQVSLEKTRNIGIMAHIDAGKTTTTERVLYYTGVSHKIGEVHDGAATMDWMEQEQERGITITSAATTCFWRDHRVNIIDTPGHVDFTVEVERSLRVLDGSVAVFCSVGGVEPQSETVWRQADKYRVPRIAFINKMDRIGADFDRGVNMIRERLGANAIPLQLPIGKEDNFSGVVDLVEMKAIVWDDESLGARFEVVDIPADLQERVDSGRELLVEEVCTHDEALMDKYLGGEEITLEELKNGIRKACIDIKIIPVLCGSAFKNKGVQNLLDAVIDYMPSPVDVPAITGVVPDTEEEITRPAGDDGPFAALAFKVMTDPFVGQLTFFRVYSGVAESGATVLNATRDKKERFGRLLKMHANKREEIKQVYSGDIAAAVGLKLTTTGDTLCDPANPCLLESMEFPEPVIHIAIEPKTKGDMDKMGQALGKLVQEDPTLRVRTDEETGQTILSGMGELHLEIIIDRLQREFKVDANVGAPQVAYRETITKAVEVQGKFVRQSGGRGQYGDCWLKLEPQEPGAGYEFVDAIKGGVIPREYIPAVGKGAEEAAENGVVAGFPIVDVKVTCYDGSYHDVDSSEMAFKIAGSMGFKAGAAKASPVLLEPVMAVEVVVPEEYMGDVMGDLSSRRGRVLGMDARGGAQVINSNVPLASMFGYATELRSMTQGRATYTMVFDHYEQVPKAISEEIVARVKG.

The tr-type G domain occupies 8–283; that stretch reads EKTRNIGIMA…AVIDYMPSPV (276 aa). GTP-binding positions include 17-24, 81-85, and 135-138; these read AHIDAGKT, DTPGH, and NKMD.

It belongs to the TRAFAC class translation factor GTPase superfamily. Classic translation factor GTPase family. EF-G/EF-2 subfamily.

It localises to the cytoplasm. Functionally, catalyzes the GTP-dependent ribosomal translocation step during translation elongation. During this step, the ribosome changes from the pre-translocational (PRE) to the post-translocational (POST) state as the newly formed A-site-bound peptidyl-tRNA and P-site-bound deacylated tRNA move to the P and E sites, respectively. Catalyzes the coordinated movement of the two tRNA molecules, the mRNA and conformational changes in the ribosome. The protein is Elongation factor G 2 of Syntrophotalea carbinolica (strain DSM 2380 / NBRC 103641 / GraBd1) (Pelobacter carbinolicus).